Reading from the N-terminus, the 622-residue chain is Chaperone protein HscA homolog (622 aa).

It belongs to the heat shock protein 70 family.

Chaperone involved in the maturation of iron-sulfur cluster-containing proteins. Has a low intrinsic ATPase activity which is markedly stimulated by HscB. The chain is Chaperone protein HscA homolog from Acidovorax ebreus (strain TPSY) (Diaphorobacter sp. (strain TPSY)).